Reading from the N-terminus, the 197-residue chain is Probable calcium-binding protein CML21 (197 aa).

Positions 1–33 (MLRPPPPSSVLTASAAAARPPASVVQPQRQAAH) are disordered. Over residues 9-30 (SVLTASAAAARPPASVVQPQRQ) the composition is skewed to low complexity. 3 EF-hand domains span residues 37–72 (AETLRLRRVFEMFDRDGDGVITPAELSGALCRLGAR), 126–161 (EKEADMREAFGVFDEDGDGYISAAELQAVLSRMGLP), and 164–197 (ACMARVRDMIAAADRDSDGRVDYEEFKAMMAAGN). Positions 50, 52, 54, 61, 139, 141, 143, 145, 150, 177, 179, 181, 183, and 188 each coordinate Ca(2+).

Functionally, potential calcium sensor. The polypeptide is Probable calcium-binding protein CML21 (CML21) (Oryza sativa subsp. japonica (Rice)).